Here is a 248-residue protein sequence, read N- to C-terminus: Probable 2-oxo-3-(5-oxofuran-2-ylidene)propanoate lactonase (248 aa).

Residues Cys123, Asp180, and His212 contribute to the active site.

It belongs to the dienelactone hydrolase family.

The catalysed reaction is 2-oxo-3-(5-oxofuran-2-ylidene)propanoate + H2O = 3-maleylpyruvate + H(+). Functionally, involved in the 5-nitroanthranilic acid (5NAA) degradation. Catalyzes the hydrolysis of the lactone to produce maleylpyruvate biodegradation of 5-nitroanthranilate. The sequence is that of Probable 2-oxo-3-(5-oxofuran-2-ylidene)propanoate lactonase (naaC) from Bradyrhizobium sp.